We begin with the raw amino-acid sequence, 554 residues long: Kinesin-like protein 3 (554 aa).

The region spanning 3 to 325 is the Kinesin motor domain; sequence SIKVVCRIRP…LRFGHRAKSI (323 aa). ATP is bound by residues 84–91 and 233–240; these read GQTGSGKT and GSESVGKS. Residues 446 to 473 are a coiled coil; that stretch reads LSSTKQQLSDLMTALGDAQERYVELVKN.

Belongs to the TRAFAC class myosin-kinesin ATPase superfamily. Kinesin family.

The protein resides in the cytoplasm. The protein localises to the cytoskeleton. Functionally, cytoplasmic motor that could play a role in Golgi membrane recycling. In Schizosaccharomyces pombe (strain 972 / ATCC 24843) (Fission yeast), this protein is Kinesin-like protein 3 (klp3).